Consider the following 70-residue polypeptide: ATP synthase subunit c (70 aa).

2 helical membrane-spanning segments follow: residues 4–24 and 45–65; these read IAAAIAIGLSALGAGIGNGLI and IMFIGVGLVEALPIIGVVIAF.

Belongs to the ATPase C chain family. As to quaternary structure, F-type ATPases have 2 components, F(1) - the catalytic core - and F(0) - the membrane proton channel. F(1) has five subunits: alpha(3), beta(3), gamma(1), delta(1), epsilon(1). F(0) has three main subunits: a(1), b(2) and c(10-14). The alpha and beta chains form an alternating ring which encloses part of the gamma chain. F(1) is attached to F(0) by a central stalk formed by the gamma and epsilon chains, while a peripheral stalk is formed by the delta and b chains.

Its subcellular location is the cell membrane. Functionally, f(1)F(0) ATP synthase produces ATP from ADP in the presence of a proton or sodium gradient. F-type ATPases consist of two structural domains, F(1) containing the extramembraneous catalytic core and F(0) containing the membrane proton channel, linked together by a central stalk and a peripheral stalk. During catalysis, ATP synthesis in the catalytic domain of F(1) is coupled via a rotary mechanism of the central stalk subunits to proton translocation. In terms of biological role, key component of the F(0) channel; it plays a direct role in translocation across the membrane. A homomeric c-ring of between 10-14 subunits forms the central stalk rotor element with the F(1) delta and epsilon subunits. The polypeptide is ATP synthase subunit c (Staphylococcus aureus (strain Mu3 / ATCC 700698)).